Consider the following 150-residue polypeptide: Large ribosomal subunit protein bL9 (150 aa).

It belongs to the bacterial ribosomal protein bL9 family.

Functionally, binds to the 23S rRNA. The polypeptide is Large ribosomal subunit protein bL9 (Pectobacterium carotovorum subsp. carotovorum (strain PC1)).